Here is a 170-residue protein sequence, read N- to C-terminus: Adenine phosphoribosyltransferase (170 aa).

It belongs to the purine/pyrimidine phosphoribosyltransferase family. As to quaternary structure, homodimer.

It is found in the cytoplasm. The enzyme catalyses AMP + diphosphate = 5-phospho-alpha-D-ribose 1-diphosphate + adenine. The protein operates within purine metabolism; AMP biosynthesis via salvage pathway; AMP from adenine: step 1/1. In terms of biological role, catalyzes a salvage reaction resulting in the formation of AMP, that is energically less costly than de novo synthesis. The sequence is that of Adenine phosphoribosyltransferase from Bacillus cereus (strain G9842).